We begin with the raw amino-acid sequence, 200 residues long: Probable molybdenum cofactor guanylyltransferase (200 aa).

GTP-binding positions include 8–10, lysine 20, aspartate 66, and aspartate 97; that span reads LAG. Aspartate 97 is a Mg(2+) binding site.

The protein belongs to the MobA family. Requires Mg(2+) as cofactor.

Its subcellular location is the cytoplasm. The enzyme catalyses Mo-molybdopterin + GTP + H(+) = Mo-molybdopterin guanine dinucleotide + diphosphate. Its function is as follows. Transfers a GMP moiety from GTP to Mo-molybdopterin (Mo-MPT) cofactor (Moco or molybdenum cofactor) to form Mo-molybdopterin guanine dinucleotide (Mo-MGD) cofactor. This is Probable molybdenum cofactor guanylyltransferase from Bacillus velezensis (strain DSM 23117 / BGSC 10A6 / LMG 26770 / FZB42) (Bacillus amyloliquefaciens subsp. plantarum).